Here is a 266-residue protein sequence, read N- to C-terminus: UPF0294 protein Ent638_0743 (266 aa).

The protein belongs to the UPF0294 family.

Its subcellular location is the cytoplasm. The protein is UPF0294 protein Ent638_0743 of Enterobacter sp. (strain 638).